The primary structure comprises 57 residues: Cytochrome b-c1 complex subunit 10, mitochondrial (57 aa).

Residues 1–23 lie on the Mitochondrial matrix side of the membrane; sequence MAGTSGLLNAVKPKIQTIDIQAA. A helical transmembrane segment spans residues 24–44; the sequence is AGWGIAAAAGAIWVVQPFGWI. Residues 45–57 lie on the Mitochondrial intermembrane side of the membrane; it reads KKTFIDPPPTEEK.

It belongs to the UQCR11/QCR10 family. As to quaternary structure, component of the ubiquinol-cytochrome c oxidoreductase (cytochrome b-c1 complex, complex III, CIII), a multisubunit enzyme composed of 10 subunits. The complex is composed of 3 respiratory subunits cytochrome b (MT-CYB), cytochrome c1 (CYC1-1 or CYC1-2) and Rieske protein (UCR1-1 or UCR1-2), 2 core protein subunits MPPalpha1 (or MPPalpha2) and MPPB, and 5 low-molecular weight protein subunits QCR7-1 (or QCR7-2), UCRQ-1 (or UCRQ-2), QCR9, UCRY and probably QCR6-1 (or QCR6-2). The complex exists as an obligatory dimer and forms supercomplexes (SCs) in the inner mitochondrial membrane with NADH-ubiquinone oxidoreductase (complex I, CI), resulting in different assemblies (supercomplexes SCI(1)III(2) and SCI(2)III(4)).

It localises to the mitochondrion inner membrane. Component of the ubiquinol-cytochrome c oxidoreductase, a multisubunit transmembrane complex that is part of the mitochondrial electron transport chain which drives oxidative phosphorylation. The respiratory chain contains 3 multisubunit complexes succinate dehydrogenase (complex II, CII), ubiquinol-cytochrome c oxidoreductase (cytochrome b-c1 complex, complex III, CIII) and cytochrome c oxidase (complex IV, CIV), that cooperate to transfer electrons derived from NADH and succinate to molecular oxygen, creating an electrochemical gradient over the inner membrane that drives transmembrane transport and the ATP synthase. The cytochrome b-c1 complex catalyzes electron transfer from ubiquinol to cytochrome c, linking this redox reaction to translocation of protons across the mitochondrial inner membrane, with protons being carried across the membrane as hydrogens on the quinol. In the process called Q cycle, 2 protons are consumed from the matrix, 4 protons are released into the intermembrane space and 2 electrons are passed to cytochrome c. This is Cytochrome b-c1 complex subunit 10, mitochondrial (UCRY) from Arabidopsis thaliana (Mouse-ear cress).